Here is a 344-residue protein sequence, read N- to C-terminus: UDP-glucose 4-epimerase (344 aa).

Residues 15–17 (GYI), 36–40 (DNLSN), 63–64 (DI), phenylalanine 85, and lysine 89 contribute to the NAD(+) site. Position 129-131 (129-131 (SAT)) interacts with substrate. The Proton acceptor role is filled by tyrosine 153. NAD(+) contacts are provided by lysine 157 and tyrosine 181. Substrate is bound by residues 181 to 183 (YFN), 202 to 204 (NNL), 220 to 222 (SIF), arginine 235, and 297 to 300 (RKGD).

Belongs to the NAD(P)-dependent epimerase/dehydratase family. In terms of assembly, homodimer. Requires NAD(+) as cofactor.

It carries out the reaction UDP-alpha-D-glucose = UDP-alpha-D-galactose. The enzyme catalyses UDP-N-acetyl-alpha-D-glucosamine = UDP-N-acetyl-alpha-D-galactosamine. It functions in the pathway carbohydrate metabolism; galactose metabolism. Functionally, catalyzes two distinct but analogous reactions: the reversible epimerization of UDP-glucose to UDP-galactose and the reversible epimerization of UDP-N-acetylglucosamine to UDP-N-acetylgalactosamine. The reaction with UDP-Gal plays a critical role in the Leloir pathway of galactose catabolism in which galactose is converted to the glycolytic intermediate glucose 6-phosphate. It contributes to the catabolism of dietary galactose and enables the endogenous biosynthesis of both UDP-Gal and UDP-GalNAc when exogenous sources are limited. Both UDP-sugar interconversions are important in the synthesis of glycoproteins and glycolipids. This chain is UDP-glucose 4-epimerase (galE), found in Dictyostelium discoideum (Social amoeba).